A 237-amino-acid polypeptide reads, in one-letter code: Phosphoribosylaminoimidazole-succinocarboxamide synthase (237 aa).

Belongs to the SAICAR synthetase family.

It catalyses the reaction 5-amino-1-(5-phospho-D-ribosyl)imidazole-4-carboxylate + L-aspartate + ATP = (2S)-2-[5-amino-1-(5-phospho-beta-D-ribosyl)imidazole-4-carboxamido]succinate + ADP + phosphate + 2 H(+). The protein operates within purine metabolism; IMP biosynthesis via de novo pathway; 5-amino-1-(5-phospho-D-ribosyl)imidazole-4-carboxamide from 5-amino-1-(5-phospho-D-ribosyl)imidazole-4-carboxylate: step 1/2. This Idiomarina loihiensis (strain ATCC BAA-735 / DSM 15497 / L2-TR) protein is Phosphoribosylaminoimidazole-succinocarboxamide synthase.